A 427-amino-acid polypeptide reads, in one-letter code: Enolase (427 aa).

Gln163 provides a ligand contact to (2R)-2-phosphoglycerate. The active-site Proton donor is Glu205. 3 residues coordinate Mg(2+): Asp242, Glu285, and Asp312. 4 residues coordinate (2R)-2-phosphoglycerate: Lys337, Arg366, Ser367, and Lys388. Lys337 serves as the catalytic Proton acceptor.

It belongs to the enolase family. It depends on Mg(2+) as a cofactor.

Its subcellular location is the cytoplasm. It is found in the secreted. The protein localises to the cell surface. The enzyme catalyses (2R)-2-phosphoglycerate = phosphoenolpyruvate + H2O. It functions in the pathway carbohydrate degradation; glycolysis; pyruvate from D-glyceraldehyde 3-phosphate: step 4/5. Catalyzes the reversible conversion of 2-phosphoglycerate (2-PG) into phosphoenolpyruvate (PEP). It is essential for the degradation of carbohydrates via glycolysis. The polypeptide is Enolase (Bradyrhizobium sp. (strain BTAi1 / ATCC BAA-1182)).